Consider the following 331-residue polypeptide: Ribosomal RNA small subunit methyltransferase C (331 aa).

It belongs to the methyltransferase superfamily. RsmC family. As to quaternary structure, monomer.

The protein resides in the cytoplasm. The catalysed reaction is guanosine(1207) in 16S rRNA + S-adenosyl-L-methionine = N(2)-methylguanosine(1207) in 16S rRNA + S-adenosyl-L-homocysteine + H(+). In terms of biological role, specifically methylates the guanine in position 1207 of 16S rRNA in the 30S particle. This Ectopseudomonas mendocina (strain ymp) (Pseudomonas mendocina) protein is Ribosomal RNA small subunit methyltransferase C.